The sequence spans 778 residues: 5-methyltetrahydropteroyltriglutamate--homocysteine methyltransferase (778 aa).

5-methyltetrahydropteroyltri-L-glutamate contacts are provided by residues Arg17–Lys20 and Lys118. L-homocysteine is bound by residues Ile436–Ser438 and Glu489. Residues Ile436–Ser438 and Glu489 each bind L-methionine. 5-methyltetrahydropteroyltri-L-glutamate contacts are provided by residues Arg520–Cys521 and Trp566. Asp604 contacts L-homocysteine. L-methionine is bound at residue Asp604. Residue Glu610 participates in 5-methyltetrahydropteroyltri-L-glutamate binding. The Zn(2+) site is built by His646, Cys648, and Glu670. The active-site Proton donor is the His699. Cys731 provides a ligand contact to Zn(2+).

Belongs to the vitamin-B12 independent methionine synthase family. It depends on Zn(2+) as a cofactor.

The catalysed reaction is 5-methyltetrahydropteroyltri-L-glutamate + L-homocysteine = tetrahydropteroyltri-L-glutamate + L-methionine. The protein operates within amino-acid biosynthesis; L-methionine biosynthesis via de novo pathway; L-methionine from L-homocysteine (MetE route): step 1/1. Its function is as follows. Catalyzes the transfer of a methyl group from 5-methyltetrahydrofolate to homocysteine resulting in methionine formation. This chain is 5-methyltetrahydropteroyltriglutamate--homocysteine methyltransferase, found in Vibrio vulnificus (strain CMCP6).